The sequence spans 309 residues: Glutaminase (309 aa).

7 residues coordinate substrate: Ser65, Asn117, Glu162, Asn169, Tyr193, Tyr245, and Val263.

Belongs to the glutaminase family. In terms of assembly, homotetramer.

The catalysed reaction is L-glutamine + H2O = L-glutamate + NH4(+). The chain is Glutaminase from Bacillus mycoides (strain KBAB4) (Bacillus weihenstephanensis).